A 102-amino-acid chain; its full sequence is Large ribosomal subunit protein bL21 (102 aa).

Belongs to the bacterial ribosomal protein bL21 family. As to quaternary structure, part of the 50S ribosomal subunit. Contacts protein L20.

Its function is as follows. This protein binds to 23S rRNA in the presence of protein L20. The chain is Large ribosomal subunit protein bL21 from Ehrlichia ruminantium (strain Gardel).